The following is a 524-amino-acid chain: Lysine--tRNA ligase (524 aa).

The short motif at 39 to 47 (ASGIPHMGS) is the 'HIGH' region element. A 'KMSKS' region motif is present at residues 294-298 (KISKS). Lys297 is a binding site for ATP.

It belongs to the class-I aminoacyl-tRNA synthetase family.

It is found in the cytoplasm. The catalysed reaction is tRNA(Lys) + L-lysine + ATP = L-lysyl-tRNA(Lys) + AMP + diphosphate. This is Lysine--tRNA ligase (lysS) from Cenarchaeum symbiosum.